We begin with the raw amino-acid sequence, 204 residues long: Translation initiation factor 2 subunit beta (204 aa).

One can recognise a TRAM domain in the interval 146–204 (AIEEGKELEVHIESISKKGDGVARIGKYILYVAGTKAGQNVKVRITRISGQVAFTQKIL).

It belongs to the eIF-2-beta/eIF-5 family. In terms of assembly, heterotrimer composed of an alpha, a beta and a gamma chain.

In terms of biological role, eIF-2 functions in the early steps of protein synthesis by forming a ternary complex with GTP and initiator tRNA. The polypeptide is Translation initiation factor 2 subunit beta (Methanocorpusculum labreanum (strain ATCC 43576 / DSM 4855 / Z)).